The chain runs to 194 residues: Holliday junction branch migration complex subunit RuvA (194 aa).

The domain I stretch occupies residues Met1 to Val63. Positions Asp64 to Phe142 are domain II. The tract at residues Phe143–Glu146 is flexible linker. A domain III region spans residues Glu146–Arg194.

This sequence belongs to the RuvA family. Homotetramer. Forms an RuvA(8)-RuvB(12)-Holliday junction (HJ) complex. HJ DNA is sandwiched between 2 RuvA tetramers; dsDNA enters through RuvA and exits via RuvB. An RuvB hexamer assembles on each DNA strand where it exits the tetramer. Each RuvB hexamer is contacted by two RuvA subunits (via domain III) on 2 adjacent RuvB subunits; this complex drives branch migration. In the full resolvosome a probable DNA-RuvA(4)-RuvB(12)-RuvC(2) complex forms which resolves the HJ.

The protein resides in the cytoplasm. In terms of biological role, the RuvA-RuvB-RuvC complex processes Holliday junction (HJ) DNA during genetic recombination and DNA repair, while the RuvA-RuvB complex plays an important role in the rescue of blocked DNA replication forks via replication fork reversal (RFR). RuvA specifically binds to HJ cruciform DNA, conferring on it an open structure. The RuvB hexamer acts as an ATP-dependent pump, pulling dsDNA into and through the RuvAB complex. HJ branch migration allows RuvC to scan DNA until it finds its consensus sequence, where it cleaves and resolves the cruciform DNA. The protein is Holliday junction branch migration complex subunit RuvA of Alkaliphilus metalliredigens (strain QYMF).